Reading from the N-terminus, the 402-residue chain is Uroporphyrinogen decarboxylase 1, chloroplastic (402 aa).

Residues 1 to 50 constitute a chloroplast transit peptide; that stretch reads MISATATAAFLAAAPASSSSCTTHRRRSGLPAISASLATASSTEEPLLVR. Residues 67–71, phenylalanine 86, serine 116, aspartate 117, tyrosine 193, serine 248, and histidine 363 each bind substrate; that span reads RQAGR.

It belongs to the uroporphyrinogen decarboxylase family. As to quaternary structure, homodimer.

It is found in the plastid. The protein resides in the chloroplast. The catalysed reaction is uroporphyrinogen III + 4 H(+) = coproporphyrinogen III + 4 CO2. Its pathway is porphyrin-containing compound metabolism; protoporphyrin-IX biosynthesis; coproporphyrinogen-III from 5-aminolevulinate: step 4/4. Functionally, catalyzes the decarboxylation of four acetate groups of uroporphyrinogen-III to yield coproporphyrinogen-III. This is Uroporphyrinogen decarboxylase 1, chloroplastic from Oryza sativa subsp. japonica (Rice).